A 492-amino-acid chain; its full sequence is MQTTSSQPRAIYYVVALQIWEYFSFYGMRALLILYLTNQLKYDDNHAYALFSAYCSLVYVTPILGGYLADKLLGNRMAVMLGALLMAIGHLVLGASETAPLFLYLSLAIIVCGYGLFKSNVSCLLGELYEPADPRRDGGFSLMYAAGNIGSIIAPIACGYVQEEYSWAMGFALAAIGMVAGLVIFLCGNRHFQHTAGVNRQALCARRFLLPNWGWLLVLLVTAPLLIAVLFWQEWSVYALIVATAIGLAVLARIYLRAETDKQRKDLRLIVVLTAFSLLFWAFAQQGGSSISLYIDRFVNRHIMSYEVPTAMFQSINAFAVMLCGMVLAWLVKESVNGNRTVRIWGKFALGLGLMSAGFCILTLSARWSAAYGQSSMPLMVLGLAVMGFAELFIDPVAMSQITRIEIPGVTGVLTGIYMLLSGAIANYLAGVIADQTSQASFDAAGAVNYSIDAYITVFSQITWGALACVGVVLVIWLYHSLKVRTRRLAVE.

The next 13 membrane-spanning stretches (helical) occupy residues 14–34, 49–69, 91–111, 138–158, 167–187, 212–232, 236–256, 269–289, 312–332, 344–364, 379–399, 413–433, and 458–478; these read VVAL…LLIL, ALFS…GYLA, LVLG…AIIV, GGFS…PIAC, WAMG…IFLC, NWGW…VLFW, SVYA…RIYL, LIVV…QGGS, MFQS…AWLV, IWGK…ILTL, LMVL…PVAM, VLTG…AGVI, and VFSQ…VIWL.

This sequence belongs to the major facilitator superfamily. Proton-dependent oligopeptide transporter (POT/PTR) (TC 2.A.17) family. DtpD subfamily.

It localises to the cell inner membrane. In terms of biological role, probable proton-dependent permease that transports dipeptides. This is Dipeptide permease D from Klebsiella pneumoniae subsp. pneumoniae (strain ATCC 700721 / MGH 78578).